Consider the following 368-residue polypeptide: Phenylalanine--tRNA ligase alpha subunit (368 aa).

E268 contributes to the Mg(2+) binding site.

The protein belongs to the class-II aminoacyl-tRNA synthetase family. Phe-tRNA synthetase alpha subunit type 1 subfamily. Tetramer of two alpha and two beta subunits. Requires Mg(2+) as cofactor.

The protein resides in the cytoplasm. It catalyses the reaction tRNA(Phe) + L-phenylalanine + ATP = L-phenylalanyl-tRNA(Phe) + AMP + diphosphate + H(+). The chain is Phenylalanine--tRNA ligase alpha subunit from Nitrobacter hamburgensis (strain DSM 10229 / NCIMB 13809 / X14).